The chain runs to 554 residues: Potassium-transporting ATPase potassium-binding subunit (554 aa).

The next 12 helical transmembrane spans lie at 3-23, 60-80, 131-151, 174-194, 252-272, 279-299, 323-343, 352-372, 375-395, 412-432, 481-501, and 522-542; these read PVLA…LAHV, PAYL…LYLL, GLAV…VALV, VRVL…CGVI, LFEI…FGIM, GYAI…LMMW, FGIG…TGAV, GLGG…PGGV, GLYG…LMVG, FAAC…AAAM, LGLA…ALAG, and LFAG…YFPA.

Belongs to the KdpA family. In terms of assembly, the system is composed of three essential subunits: KdpA, KdpB and KdpC.

The protein localises to the cell membrane. Its function is as follows. Part of the high-affinity ATP-driven potassium transport (or Kdp) system, which catalyzes the hydrolysis of ATP coupled with the electrogenic transport of potassium into the cytoplasm. This subunit binds the extracellular potassium ions and delivers the ions to the membrane domain of KdpB through an intramembrane tunnel. This is Potassium-transporting ATPase potassium-binding subunit from Streptomyces coelicolor (strain ATCC BAA-471 / A3(2) / M145).